The chain runs to 2037 residues: Fatty acid synthase subunit beta (2037 aa).

Residues 1–453 are acetyltransferase; the sequence is MSTHRPFQLT…VYDTFDGSDF (453 aa). S261 functions as the For acetyltransferase activity in the catalytic mechanism. The enoyl reductase stretch occupies residues 465-798; the sequence is VKLITELPVH…GSRVMTSKES (334 aa). Residues 1132–1612 are dehydratase; it reads GTELNWLQAF…LPNDTLQTTM (481 aa). Residues 1506-1634 enclose the MaoC-like domain; the sequence is NGKTIEESVI…KVETRNVETE (129 aa). Residues 1613–1833 form a malonyl/palmitoyl transferase region; that stretch reads EHVGMINGRK…MTMQVAVPRD (221 aa). The For malonyltransferase activity role is filled by S1796.

Belongs to the fungal fatty acid synthetase subunit beta family. In terms of assembly, [Alpha(6)beta(6)] hexamers of two multifunctional subunits (alpha and beta).

It catalyses the reaction acetyl-CoA + n malonyl-CoA + 2n NADPH + 4n H(+) = a long-chain-acyl-CoA + n CoA + n CO2 + 2n NADP(+).. The catalysed reaction is holo-[ACP] + acetyl-CoA = acetyl-[ACP] + CoA. It carries out the reaction holo-[ACP] + malonyl-CoA = malonyl-[ACP] + CoA. The enzyme catalyses a (3R)-hydroxyacyl-[ACP] = a (2E)-enoyl-[ACP] + H2O. It catalyses the reaction a 2,3-saturated acyl-[ACP] + NAD(+) = a (2E)-enoyl-[ACP] + NADH + H(+). The catalysed reaction is (9Z)-octadecenoyl-[ACP] + H2O = (9Z)-octadecenoate + holo-[ACP] + H(+). Functionally, fatty acid synthetase catalyzes the formation of long-chain fatty acids from acetyl-CoA, malonyl-CoA and NADPH. The beta subunit contains domains for: [acyl-carrier-protein] acetyltransferase and malonyltransferase, S-acyl fatty acid synthase thioesterase, enoyl-[acyl-carrier-protein] reductase, and 3-hydroxypalmitoyl-[acyl-carrier-protein] dehydratase. The chain is Fatty acid synthase subunit beta (FAS1) from Candida albicans (Yeast).